The sequence spans 371 residues: Putative F-box protein At1g58090 (371 aa).

Positions 1 to 46 constitute an F-box domain; the sequence is MVSKKLPLDLEEEILFRVPPRSLVRFRSVCREWNTLFKNKRFINKN.

In Arabidopsis thaliana (Mouse-ear cress), this protein is Putative F-box protein At1g58090.